A 62-amino-acid polypeptide reads, in one-letter code: UPF0339 protein Atu5359 (62 aa).

Belongs to the UPF0339 family.

The chain is UPF0339 protein Atu5359 from Agrobacterium fabrum (strain C58 / ATCC 33970) (Agrobacterium tumefaciens (strain C58)).